Here is a 206-residue protein sequence, read N- to C-terminus: Thymidylate kinase (206 aa).

16-23 (GIDGTGKS) is a binding site for ATP.

This sequence belongs to the thymidylate kinase family.

It carries out the reaction dTMP + ATP = dTDP + ADP. Its function is as follows. Phosphorylation of dTMP to form dTDP in both de novo and salvage pathways of dTTP synthesis. This chain is Thymidylate kinase, found in Akkermansia muciniphila (strain ATCC BAA-835 / DSM 22959 / JCM 33894 / BCRC 81048 / CCUG 64013 / CIP 107961 / Muc).